Reading from the N-terminus, the 108-residue chain is Insertion element IS629 uncharacterized 12 kDa protein S4062 (108 aa).

This sequence belongs to the transposase 8 family.

This Shigella flexneri protein is Insertion element IS629 uncharacterized 12 kDa protein S4062.